We begin with the raw amino-acid sequence, 180 residues long: Large ribosomal subunit protein uL5 (180 aa).

This sequence belongs to the universal ribosomal protein uL5 family. In terms of assembly, part of the 50S ribosomal subunit; part of the 5S rRNA/L5/L18/L25 subcomplex. Contacts the 5S rRNA and the P site tRNA. Forms a bridge to the 30S subunit in the 70S ribosome.

This is one of the proteins that bind and probably mediate the attachment of the 5S RNA into the large ribosomal subunit, where it forms part of the central protuberance. In the 70S ribosome it contacts protein S13 of the 30S subunit (bridge B1b), connecting the 2 subunits; this bridge is implicated in subunit movement. Contacts the P site tRNA; the 5S rRNA and some of its associated proteins might help stabilize positioning of ribosome-bound tRNAs. In Chlamydia pneumoniae (Chlamydophila pneumoniae), this protein is Large ribosomal subunit protein uL5.